Consider the following 63-residue polypeptide: Large ribosomal subunit protein uL29 (63 aa).

Belongs to the universal ribosomal protein uL29 family.

The chain is Large ribosomal subunit protein uL29 from Aeromonas salmonicida (strain A449).